A 127-amino-acid polypeptide reads, in one-letter code: Egg cell-secreted protein 1.4 (127 aa).

A signal peptide spans 1-25 (MASNTTFLFSTVTLLIILLNTTVSG).

The protein belongs to the plant egg cell-secreted peptide family. In terms of tissue distribution, restricted to female reproductive tissues, specifically accumulating in storage vesicles of the unfertilized egg cell.

It localises to the cytoplasmic vesicle. The protein localises to the secreted. In terms of biological role, involved in the regulation of gamete interactions during the double fertilization and to prevent multiple-pollen tube attraction; mediates the redistribution of the gamete fusogen HAP2/GCS1 to the cell surface after secretion upon sperm arrival. The polypeptide is Egg cell-secreted protein 1.4 (EC1.4) (Arabidopsis thaliana (Mouse-ear cress)).